Here is a 444-residue protein sequence, read N- to C-terminus: Pestheic acid cluster transcriptional regulator 2 (444 aa).

Residues 1 to 22 (MEAADPNNNLTITSPSTLLSNP) show a composition bias toward polar residues. A disordered region spans residues 1 to 31 (MEAADPNNNLTITSPSTLLSNPTQPPAQPLK). The zn(2)-C6 fungal-type DNA-binding region spans 36–63 (CHACASSKVKCHKEKPTCSRCRKRGITC). Residues 326–348 (ARVGSGVSTHTTAGQYEPQVEQQ) are disordered. Residues 331–348 (GVSTHTTAGQYEPQVEQQ) show a composition bias toward polar residues.

The protein resides in the nucleus. In terms of biological role, transcription factor that, with ptaR1 and ptaR3, coregulates the expression of the gene cluster that mediates the biosynthesis of pestheic acid, a diphenyl ether which is a biosynthetic precursor of the unique chloropupukeananes. This is Pestheic acid cluster transcriptional regulator 2 from Pestalotiopsis fici (strain W106-1 / CGMCC3.15140).